We begin with the raw amino-acid sequence, 317 residues long: Protoheme IX farnesyltransferase (317 aa).

Transmembrane regions (helical) follow at residues 39-59, 60-80, 109-129, 131-151, 160-180, 184-204, 249-269, and 297-317; these read VLYLVVYTGAAGLLVAPGGIN, PILGFTAILCIAMAAGAAGAI, GALAYGVALSALSVLLMWLAT, LLAAGLLAASIGFYVFIYTMW, IVIGGAAGAFPPVIGWAAATG, LLPVLLFAIIFFWTPPHFWAL, VLHLAGPVYGASAMVLGLAFV, and FKFSILYLFLIFGALVLDHLV.

It belongs to the UbiA prenyltransferase family. Protoheme IX farnesyltransferase subfamily.

Its subcellular location is the cell inner membrane. It carries out the reaction heme b + (2E,6E)-farnesyl diphosphate + H2O = Fe(II)-heme o + diphosphate. It participates in porphyrin-containing compound metabolism; heme O biosynthesis; heme O from protoheme: step 1/1. Functionally, converts heme B (protoheme IX) to heme O by substitution of the vinyl group on carbon 2 of heme B porphyrin ring with a hydroxyethyl farnesyl side group. The polypeptide is Protoheme IX farnesyltransferase (Acidiphilium cryptum (strain JF-5)).